Reading from the N-terminus, the 510-residue chain is Ribose import ATP-binding protein RbsA 1 (510 aa).

ABC transporter domains follow at residues 20 to 256 (LEMR…VGRD) and 266 to 510 (VTLG…TGNA). 52–59 (GENGAGKS) contributes to the ATP binding site.

The protein belongs to the ABC transporter superfamily. Ribose importer (TC 3.A.1.2.1) family. In terms of assembly, the complex is composed of an ATP-binding protein (RbsA), two transmembrane proteins (RbsC) and a solute-binding protein (RbsB).

The protein localises to the cell inner membrane. The catalysed reaction is D-ribose(out) + ATP + H2O = D-ribose(in) + ADP + phosphate + H(+). In terms of biological role, part of the ABC transporter complex RbsABC involved in ribose import. Responsible for energy coupling to the transport system. This is Ribose import ATP-binding protein RbsA 1 from Agrobacterium fabrum (strain C58 / ATCC 33970) (Agrobacterium tumefaciens (strain C58)).